The chain runs to 312 residues: Very-long-chain 3-oxoacyl-CoA reductase (312 aa).

The chain crosses the membrane as a helical span at residues 4 to 24 (APPAAGFLYWVGASTIAYLAL). 50–79 (GEWAVVTGGTDGIGKAYAEELAKRGMKIVL) serves as a coordination point for NADP(+). 2 helical membrane passes run 182-202 (GVIL…LTIY) and 269-285 (TTGY…NSIM). Residue serine 189 participates in substrate binding. Residue tyrosine 202 is the Proton acceptor of the active site. The Di-lysine motif signature appears at 308-312 (KRKKN).

It belongs to the short-chain dehydrogenases/reductases (SDR) family. 17-beta-HSD 3 subfamily. As to expression, expressed in most tissues tested.

It is found in the endoplasmic reticulum membrane. It catalyses the reaction a very-long-chain (3R)-3-hydroxyacyl-CoA + NADP(+) = a very-long-chain 3-oxoacyl-CoA + NADPH + H(+). The enzyme catalyses 17beta-estradiol + NAD(+) = estrone + NADH + H(+). The catalysed reaction is 17beta-estradiol + NADP(+) = estrone + NADPH + H(+). It carries out the reaction 3-oxooctadecanoyl-CoA + NADPH + H(+) = (3R)-hydroxyoctadecanoyl-CoA + NADP(+). It catalyses the reaction (7Z,10Z,13Z,16Z)-3-oxodocosatetraenoyl-CoA + NADPH + H(+) = (3R)-hydroxy-(7Z,10Z,13Z,16Z)-docosatetraenoyl-CoA + NADP(+). The enzyme catalyses 3-oxo-(7Z,10Z,13Z,16Z,19Z)-docosapentaenoyl-CoA + NADPH + H(+) = (3R)-hydroxy-(7Z,10Z,13Z,16Z,19Z)-docosapentaenoyl-CoA + NADP(+). The catalysed reaction is (8Z,11Z,14Z)-3-oxoeicosatrienoyl-CoA + NADPH + H(+) = (3R)-hydroxy-(8Z,11Z,14Z)-eicosatrienoyl-CoA + NADP(+). It functions in the pathway lipid metabolism; fatty acid biosynthesis. It participates in steroid biosynthesis; estrogen biosynthesis. Functionally, catalyzes the second of the four reactions of the long-chain fatty acids elongation cycle. This endoplasmic reticulum-bound enzymatic process, allows the addition of two carbons to the chain of long- and very long-chain fatty acids/VLCFAs per cycle. This enzyme has a 3-ketoacyl-CoA reductase activity, reducing 3-ketoacyl-CoA to 3-hydroxyacyl-CoA, within each cycle of fatty acid elongation. Thereby, it may participate in the production of VLCFAs of different chain lengths that are involved in multiple biological processes as precursors of membrane lipids and lipid mediators. May also catalyze the transformation of estrone (E1) into estradiol (E2) and play a role in estrogen formation. The protein is Very-long-chain 3-oxoacyl-CoA reductase of Mus musculus (Mouse).